Reading from the N-terminus, the 305-residue chain is Uracil-DNA glycosylase (305 aa).

Catalysis depends on aspartate 148, which acts as the Proton acceptor.

It belongs to the uracil-DNA glycosylase (UDG) superfamily. UNG family.

It is found in the host nucleus. It carries out the reaction Hydrolyzes single-stranded DNA or mismatched double-stranded DNA and polynucleotides, releasing free uracil.. In terms of biological role, excises uracil residues from the DNA which can arise as a result of misincorporation of dUMP residues by DNA polymerase or deamination of cytosines. Therefore may reduce deleterious uracil incorporation into the viral genome, particularly in terminally differentiated cells which lack DNA repair enzymes. In Varicella-zoster virus (strain Dumas) (HHV-3), this protein is Uracil-DNA glycosylase.